The chain runs to 413 residues: Multifunctional CCA protein (413 aa).

Positions 8 and 11 each coordinate ATP. CTP-binding residues include G8 and R11. The Mg(2+) site is built by D21 and D23. R91, R137, and R140 together coordinate ATP. CTP is bound by residues R91, R137, and R140. One can recognise an HD domain in the interval 228 to 329 (TGVHTLMTLS…VKLFDAIDAW (102 aa)).

Belongs to the tRNA nucleotidyltransferase/poly(A) polymerase family. Bacterial CCA-adding enzyme type 1 subfamily. In terms of assembly, monomer. Can also form homodimers and oligomers. Requires Mg(2+) as cofactor. It depends on Ni(2+) as a cofactor.

The catalysed reaction is a tRNA precursor + 2 CTP + ATP = a tRNA with a 3' CCA end + 3 diphosphate. The enzyme catalyses a tRNA with a 3' CCA end + 2 CTP + ATP = a tRNA with a 3' CCACCA end + 3 diphosphate. In terms of biological role, catalyzes the addition and repair of the essential 3'-terminal CCA sequence in tRNAs without using a nucleic acid template. Adds these three nucleotides in the order of C, C, and A to the tRNA nucleotide-73, using CTP and ATP as substrates and producing inorganic pyrophosphate. tRNA 3'-terminal CCA addition is required both for tRNA processing and repair. Also involved in tRNA surveillance by mediating tandem CCA addition to generate a CCACCA at the 3' terminus of unstable tRNAs. While stable tRNAs receive only 3'-terminal CCA, unstable tRNAs are marked with CCACCA and rapidly degraded. In Salmonella agona (strain SL483), this protein is Multifunctional CCA protein.